A 216-amino-acid polypeptide reads, in one-letter code: Large ribosomal subunit protein uL3 (216 aa).

Residue Q157 is modified to N5-methylglutamine.

Belongs to the universal ribosomal protein uL3 family. Part of the 50S ribosomal subunit. Forms a cluster with proteins L14 and L19. Post-translationally, methylated by PrmB.

Its function is as follows. One of the primary rRNA binding proteins, it binds directly near the 3'-end of the 23S rRNA, where it nucleates assembly of the 50S subunit. The sequence is that of Large ribosomal subunit protein uL3 from Stenotrophomonas maltophilia (strain R551-3).